The sequence spans 412 residues: Protein arginine N-methyltransferase 2 (412 aa).

The RMT2 domain maps to 190-412; that stretch reads TAADPDTYLN…YYYHPKISFA (223 aa). Residues Tyr197, Met227, 250–255, 271–273, 298–299, and Asp319 contribute to the S-adenosyl-L-methionine site; these read FGMGII, EAH, and WQ.

This sequence belongs to the class I-like SAM-binding methyltransferase superfamily. RMT2 methyltransferase family. In terms of assembly, monomer.

It localises to the cytoplasm. The protein resides in the nucleus. In terms of biological role, S-adenosyl-L-methionine-dependent protein-arginine N-methyltransferase that methylates the delta-nitrogen atom of arginine residues to form N5-methylarginine (type IV) in target proteins. Monomethylates ribosomal protein L12. The sequence is that of Protein arginine N-methyltransferase 2 from Candida glabrata (strain ATCC 2001 / BCRC 20586 / JCM 3761 / NBRC 0622 / NRRL Y-65 / CBS 138) (Yeast).